The following is a 155-amino-acid chain: Ribosome maturation factor RimP (155 aa).

The protein belongs to the RimP family.

It is found in the cytoplasm. Required for maturation of 30S ribosomal subunits. The polypeptide is Ribosome maturation factor RimP (Maridesulfovibrio salexigens (strain ATCC 14822 / DSM 2638 / NCIMB 8403 / VKM B-1763) (Desulfovibrio salexigens)).